The sequence spans 540 residues: ADP,ATP carrier protein 2 (540 aa).

A run of 11 helical transmembrane segments spans residues 24-44 (FSKFVPLFLLAFFVGFNYCLL), 62-82 (VIPFLKVWGIVPGAVIVTMVY), 94-114 (VFYCFMAAFLGFFFLFAVIIY), 151-171 (IYYVMSELWSSVVLSMLFWGL), 223-243 (SVMLNLTMLITCSGLIMIWLY), 295-315 (LLGLAIIVLSYNLVIHLFEVV), 337-357 (ITTLIGVVSVLAAVLLTGQCI), 367-387 (LVTPLVMLVSGLLFFGTIFAA), 391-411 (ISIFGGVLGMTPLALAAWTGG), 458-478 (SGGSLIYQGLLVIFSSVAASL), and 480-500 (VIALVLLIIMVVWIAVVAYIG).

The protein belongs to the ADP/ATP translocase tlc family.

Its subcellular location is the cell membrane. The chain is ADP,ATP carrier protein 2 (tlcB) from Chlamydia pneumoniae (Chlamydophila pneumoniae).